A 167-amino-acid polypeptide reads, in one-letter code: E1B protein, small T-antigen (167 aa).

A disordered region spans residues 143 to 167 (GLDPVQEEEEEEENLRAGLDPSTEL).

Belongs to the adenoviridae E1B 19 kDa protein family.

The protein localises to the host cell membrane. The protein resides in the host nucleus envelope. Its subcellular location is the host nucleus lamina. Its function is as follows. Putative adenovirus Bcl-2 homolog that inhibits apoptosis induced by TNF or FAS pathways, as well as p53-mediated apoptosis. Without E1B 19K function, virus production is compromised because of premature death of host cell. Interacts with Bax protein in cell lysates. The sequence is that of E1B protein, small T-antigen from Human adenovirus F serotype 40 (HAdV-40).